Consider the following 605-residue polypeptide: Glycerophosphodiester phosphodiesterase domain-containing protein 5 (605 aa).

Topologically, residues 1–42 (MVRHQPLQYYEPQLCLSCLTGIYGCRWKRYQRSHDDTTPWER) are cytoplasmic. 2 disulfide bridges follow: Cys-15–Cys-18 and Cys-25–Cys-571. Residues 43–63 (LWFLLLTFTFGLTLTWLYFWW) traverse the membrane as a helical segment. At 64–89 (EVHNDYDEFNWYLYNRMGYWSDWPVP) the chain is on the extracellular side. Residues 90–110 (ILVTTAAAFAYIAGLLVLALC) form a helical membrane-spanning segment. The Cytoplasmic segment spans residues 111-125 (HIAVGQQMNLHWLHK). Residues 126 to 146 (IGLVVILASTVVAMSAVAQLW) form a helical membrane-spanning segment. Over 147–160 (EDEWEVLLISLQGT) the chain is Extracellular. A helical transmembrane segment spans residues 161 to 181 (APFLHVGAVAAVTMLSWIVAG). The Cytoplasmic segment spans residues 182–192 (QFARAERTSSQ). A helical membrane pass occupies residues 193 to 213 (VTILCTFFTVVFALYLAPLTI). Topologically, residues 214–496 (SSPCIMEKKD…PLWIMPPDEY (283 aa)) are extracellular. The GP-PDE domain maps to 228–485 (PALIGHRGAP…DNSHALSQVP (258 aa)). Residues Asn-301, Asn-336, Asn-352, Asn-374, and Asn-448 are each glycosylated (N-linked (GlcNAc...) asparagine). A helical transmembrane segment spans residues 497 to 517 (CLMWVTADLVSFTLIVGIFVL). Over 518–605 (QKWRLGGIRS…TKTLIERSGR (88 aa)) the chain is Cytoplasmic. Residues 582–605 (STATPVGPRGGGSHTKTLIERSGR) form a disordered region.

The protein belongs to the glycerophosphoryl diester phosphodiesterase family. In terms of assembly, interacts with PRDX1; forms a mixed-disulfide with PRDX1, leading to disrupt intramolecular disulfide bond between Cys-25 and Cys-571. Post-translationally, intramolecular disulfide bond between Cys-25 and Cys-571 is reduced by PRDX1.

Its subcellular location is the endomembrane system. The protein resides in the cytoplasm. The protein localises to the perinuclear region. It is found in the cell projection. It localises to the growth cone. It carries out the reaction a 1,2-diacyl-sn-glycero-3-phospho-(1D-myo-inositol-4,5-bisphosphate) + H2O = 1D-myo-inositol 1,4,5-trisphosphate + a 1,2-diacyl-sn-glycerol + H(+). The enzyme catalyses sn-glycerol 3-phosphocholine + H2O = sn-glycerol 3-phosphate + choline + H(+). In terms of biological role, glycerophosphodiester phosphodiesterase that promotes neurite formation and drives spinal motor neuron differentiation. Mediates the cleavage of glycosylphosphatidylinositol (GPI) anchor of target proteins: removes the GPI-anchor of RECK, leading to release RECK from the plasma membrane. May contribute to the osmotic regulation of cellular glycerophosphocholine. This is Glycerophosphodiester phosphodiesterase domain-containing protein 5 from Homo sapiens (Human).